Reading from the N-terminus, the 208-residue chain is FMN-dependent NADH:quinone oxidoreductase (208 aa).

FMN-binding positions include serine 9, 15-17, 96-99, and 140-143; these read SAS, MYNF, and TRGG.

It belongs to the azoreductase type 1 family. As to quaternary structure, homodimer. Requires FMN as cofactor.

It catalyses the reaction 2 a quinone + NADH + H(+) = 2 a 1,4-benzosemiquinone + NAD(+). It carries out the reaction N,N-dimethyl-1,4-phenylenediamine + anthranilate + 2 NAD(+) = 2-(4-dimethylaminophenyl)diazenylbenzoate + 2 NADH + 2 H(+). Quinone reductase that provides resistance to thiol-specific stress caused by electrophilic quinones. Its function is as follows. Also exhibits azoreductase activity. Catalyzes the reductive cleavage of the azo bond in aromatic azo compounds to the corresponding amines. The sequence is that of FMN-dependent NADH:quinone oxidoreductase from Ralstonia nicotianae (strain ATCC BAA-1114 / GMI1000) (Ralstonia solanacearum).